Reading from the N-terminus, the 486-residue chain is Elastin-binding protein EbpS (486 aa).

Positions 1 to 40 (MSNNFKDDFEKNRQSIDTNSHQDHTEDVEKDQSELEHQDT) are enriched in basic and acidic residues. The tract at residues 1–314 (MSNNFKDDFE…HHDRDKERKK (314 aa)) is disordered. Topologically, residues 2–204 (SNNFKDDFEK…ESKDHHSGKK (203 aa)) are extracellular. The segment at 14 to 34 (QSIDTNSHQDHTEDVEKDQSE) is elastin-binding. Residues 64–85 (TNHNKQVHNESQTSEDNVQNEA) show a composition bias toward polar residues. 3 stretches are compositionally biased toward basic and acidic residues: residues 103–117 (EPSHQDSTPQHEEGY), 126–160 (DKSHPEPIEDNDKHETIKEAENNTEHSTVSDKSEA), and 180–199 (SKDKHDDVTVKQDKDESKDH). The span at 204–225 (KGAAIGAGTAGVAGAAGAMGVS) shows a compositional bias: low complexity. Residues 205 to 225 (GAAIGAGTAGVAGAAGAMGVS) form a helical membrane-spanning segment. The Cytoplasmic segment spans residues 226–319 (KAKKHSNDAQ…KERKKGGMAK (94 aa)). Polar residues predominate over residues 233 to 246 (DAQNKSNSGKVNNS). Residues 247–259 (TEDKASEDKSKEH) are compositionally biased toward basic and acidic residues. Residues 278 to 297 (GAASNSASAASKPHASNNAS) are compositionally biased toward low complexity. Residues 300 to 314 (NDEHDHHDRDKERKK) show a composition bias toward basic and acidic residues. Residues 320 to 340 (VLLPLIAAVLIIGALAIFGGM) traverse the membrane as a helical segment. The Extracellular portion of the chain corresponds to 341-486 (ALNNHNNGTK…IRNGQQIVIP (146 aa)). Residues 351-440 (ENKIANTNKN…QRQGGGQRHT (90 aa)) are disordered. A compositionally biased stretch (basic and acidic residues) spans 361–398 (NADESKDKDTSKDASKDKSKSTDSDKSKDDQDKATKDE). Over residues 403–431 (QNNANQANNQAQNNQNQQQANQNQQQQQQ) the composition is skewed to low complexity. Positions 437–485 (QRHTVNGQENLYRIAIQYYGSGSPENVEKIRRANGLSGNNIRNGQQIVI) constitute a LysM domain.

The protein localises to the cell membrane. Functionally, promotes binding of soluble elastin peptides and tropoelastin to S.aureus cells although it is not able to promote bacterial adherence to immobilized elastin and, therefore, is not a microbial surface component recognizing adhesive matrix molecule (MSCRAMM). The chain is Elastin-binding protein EbpS (ebpS) from Staphylococcus aureus (strain MRSA252).